The sequence spans 240 residues: LOB domain-containing protein 39 (240 aa).

In terms of domain architecture, LOB spans 1–107 (MSCNGCRVLR…VETVLRGGTL (107 aa)). The disordered stretch occupies residues 200–233 (GDRPGSPSEESVTTSCWENGMRGDNKQKRNKGEK). Positions 207 to 216 (SEESVTTSCW) are enriched in polar residues.

The protein belongs to the LOB domain-containing protein family. In terms of tissue distribution, expressed in young shoots, roots, stems, leaves and flowers.

This chain is LOB domain-containing protein 39 (LBD39), found in Arabidopsis thaliana (Mouse-ear cress).